The chain runs to 643 residues: Thread biopolymer filament subunit alpha (643 aa).

Polar residues predominate over residues M1–K13. Positions M1 to G34 are disordered. The segment at M1–R191 is head. Positions S14–K31 are enriched in low complexity. Residues E192 to I510 enclose the IF rod domain. The segment at K193–I227 is coil 1A. The tract at residues T228 to T240 is linker 1. The coil 1B stretch occupies residues A241–A341. The interval A342 to I362 is linker 12. Residues D363–K381 are coil 2A. The linker 2 stretch occupies residues S382 to Q389. Positions V390 to I510 are coil 2B. Positions S511–Y643 are tail. Residues S622–Y643 form a disordered region.

This sequence belongs to the intermediate filament family. As to quaternary structure, coiled-coil heterodimer of an alpha and a gamma subunit. Assemble into 10 nm filaments. Forms a massive, conical, intermediate filament biopolymer of approximately 60 cm.

It is found in the secreted. The protein resides in the extracellular space. Functionally, released extracellularly into seawater and provides physical and biological defense against invasive organism by modulation of the viscoelastic properties of mucus. This Eptatretus stoutii (Pacific hagfish) protein is Thread biopolymer filament subunit alpha.